A 1042-amino-acid polypeptide reads, in one-letter code: Aldehyde reductase lnaA (1042 aa).

The segment at His29–Arg425 is adenylation (A) domain. In terms of domain architecture, Carrier spans Asp532 to Ile609. O-(pantetheine 4'-phosphoryl)serine is present on Ser569. Residues Leu655–Val897 form a short-chain dehydrogenase/reductase (R) domain region.

The protein belongs to the NRP synthetase family.

It catalyses the reaction L-tyrosinal + AMP + diphosphate + NADP(+) = L-tyrosine + ATP + NADPH + H(+). It participates in secondary metabolite biosynthesis. In terms of biological role, non-canonical nonribosomal peptide synthetase; part of the lna gene cluster that mediates the biosynthesis of diastereomeric piperazines. Lna and lnb clusters encode sets of enzymes that produce overlapping sets of previously undescribed metabolites such as piperazinomycin-like metabolites or morpholine. The lna and lnb biosynthetic pathways appear to be part of a signaling network that controls the formation of sclerotia, a resilient overwintering structure. One primary function of the non-canonical nonribosomal peptide synthetases lnaA and lnbA consists in the reduction of L-tyrosine. The presence in the clusters of tailoring enzymes such as the oxidoreductases lnaB, lnbB, lnaE or lnbE, as well as of the cytochrome P450 monooxygenases lnaC, lnaD, or lnbC, might explain formation of various diastereomeric piperazines. This chain is Aldehyde reductase lnaA, found in Aspergillus flavus (strain ATCC 200026 / FGSC A1120 / IAM 13836 / NRRL 3357 / JCM 12722 / SRRC 167).